Consider the following 156-residue polypeptide: Small ribosomal subunit protein uS7 (156 aa).

Belongs to the universal ribosomal protein uS7 family. Part of the 30S ribosomal subunit. Contacts proteins S9 and S11.

In terms of biological role, one of the primary rRNA binding proteins, it binds directly to 16S rRNA where it nucleates assembly of the head domain of the 30S subunit. Is located at the subunit interface close to the decoding center, probably blocks exit of the E-site tRNA. This Campylobacter curvus (strain 525.92) protein is Small ribosomal subunit protein uS7.